The sequence spans 429 residues: Probable M18 family aminopeptidase 2 (429 aa).

Zn(2+) is bound by residues H82, H156, and H401.

Belongs to the peptidase M18 family. Zn(2+) is required as a cofactor.

In Pseudomonas entomophila (strain L48), this protein is Probable M18 family aminopeptidase 2.